A 610-amino-acid polypeptide reads, in one-letter code: UvrABC system protein C (610 aa).

Residues 16–94 form the GIY-YIG domain; sequence SQPGVYRMYD…IKLYQPRYNV (79 aa). The UVR domain occupies 204-239; it reads DQVLTQLIARMEKASQDLAFEEAARIRDQIQAVRRV.

It belongs to the UvrC family. Interacts with UvrB in an incision complex.

Its subcellular location is the cytoplasm. In terms of biological role, the UvrABC repair system catalyzes the recognition and processing of DNA lesions. UvrC both incises the 5' and 3' sides of the lesion. The N-terminal half is responsible for the 3' incision and the C-terminal half is responsible for the 5' incision. This Salmonella typhimurium (strain LT2 / SGSC1412 / ATCC 700720) protein is UvrABC system protein C.